Here is a 79-residue protein sequence, read N- to C-terminus: Putative antitoxin VapB1 (79 aa).

In terms of biological role, antitoxin component of a possible type II toxin-antitoxin (TA) system. The cognate toxin is VapC1. This Mycobacterium tuberculosis (strain ATCC 25618 / H37Rv) protein is Putative antitoxin VapB1 (vapB1).